Consider the following 453-residue polypeptide: Pre-mRNA-splicing factor prp46 (453 aa).

Positions 62 to 71 (EKQAKAAAAG) are enriched in low complexity. The tract at residues 62-129 (EKQAKAAAAG…PSATRQQRPD (68 aa)) is disordered. WD repeat units follow at residues 142–181 (GHLGWVRSLAVEPNNEWFASGAGDRTIKIWNLATGALRLT), 184–223 (GHISTVRGLAVSPRHPYLFSCGEDKMVKCWDLETNKVIRH), 226–265 (GHLSGVYTLALHPRLDLLVTGGRDGVARVWDMRTRSNIHV), 268–309 (GHKG…GVLT), 311–350 (HKKGVRNLAIHPREFTFASASTGSIKQWKCPEGDFMQNFE), 351–389 (GHNAVINSLAVNEDNVLFSGGDNGSMCFWDWKTGYKFQS), and 400–439 (DAEAGIMSATFDRTGLRLITGEADKTIKVWKPDDEATPES). The tract at residues 432–453 (DDEATPESHPVTWAPTLGRQRY) is disordered.

It belongs to the WD repeat PRL1/PRL2 family. In terms of assembly, associated with the spliceosome.

Its subcellular location is the cytoplasm. It is found in the nucleus. Its function is as follows. Involved in pre-mRNA splicing and required for cell cycle progression at G2/M. This is Pre-mRNA-splicing factor prp46 (prp46) from Aspergillus fumigatus (strain ATCC MYA-4609 / CBS 101355 / FGSC A1100 / Af293) (Neosartorya fumigata).